The sequence spans 225 residues: Cardiotrophin-like cytokine factor 1 (225 aa).

The first 27 residues, 1-27, serve as a signal peptide directing secretion; sequence MDLRAGDSWGMLACLCTVLWHLPAVPA. N29 carries N-linked (GlcNAc...) asparagine glycosylation.

This sequence belongs to the IL-6 superfamily. As to quaternary structure, forms a heteromeric complex with cardiotrophin-like cytokine CRLF1/CLF-1; the CRLF1-CLCF1 complex is a ligand for the ciliary neurotrophic factor receptor/CNTFR. The CRLF1-CLCF1 heterodimer binds SORL1 (via N-terminal ectodomain); within this complex, the interaction is mediated predominantly by the CRLF1 moiety. The tripartite signaling complex formed by CRLF1, CLCF1 and CNTFR also binds SORL1. Expressed predominantly in lymph nodes, spleen, peripheral blood lymphocytes, bone marrow, and fetal liver.

It localises to the secreted. Functionally, in complex with CRLF1, forms a heterodimeric neurotropic cytokine that plays a crucial role during neuronal development. Also stimulates B-cells. Binds to and activates the ILST/gp130 receptor. The polypeptide is Cardiotrophin-like cytokine factor 1 (CLCF1) (Homo sapiens (Human)).